A 264-amino-acid chain; its full sequence is Tryptophan synthase alpha chain (264 aa).

Residues E49 and D60 each act as proton acceptor in the active site.

This sequence belongs to the TrpA family. Tetramer of two alpha and two beta chains.

It catalyses the reaction (1S,2R)-1-C-(indol-3-yl)glycerol 3-phosphate + L-serine = D-glyceraldehyde 3-phosphate + L-tryptophan + H2O. It participates in amino-acid biosynthesis; L-tryptophan biosynthesis; L-tryptophan from chorismate: step 5/5. In terms of biological role, the alpha subunit is responsible for the aldol cleavage of indoleglycerol phosphate to indole and glyceraldehyde 3-phosphate. The polypeptide is Tryptophan synthase alpha chain (Microcystis aeruginosa (strain NIES-843 / IAM M-2473)).